The following is a 269-amino-acid chain: Indole-3-glycerol phosphate synthase 1 (269 aa).

Belongs to the TrpC family.

It carries out the reaction 1-(2-carboxyphenylamino)-1-deoxy-D-ribulose 5-phosphate + H(+) = (1S,2R)-1-C-(indol-3-yl)glycerol 3-phosphate + CO2 + H2O. The protein operates within amino-acid biosynthesis; L-tryptophan biosynthesis; L-tryptophan from chorismate: step 4/5. The chain is Indole-3-glycerol phosphate synthase 1 (trpC1) from Streptomyces coelicolor (strain ATCC BAA-471 / A3(2) / M145).